The sequence spans 329 residues: DNA-directed RNA polymerase subunit alpha (329 aa).

An alpha N-terminal domain (alpha-NTD) region spans residues 1-234 (MQGSVTEFLK…EQLDAFVELR (234 aa)). The alpha C-terminal domain (alpha-CTD) stretch occupies residues 248–329 (FDPILLRPVD…WPPASLVDDL (82 aa)).

The protein belongs to the RNA polymerase alpha chain family. As to quaternary structure, homodimer. The RNAP catalytic core consists of 2 alpha, 1 beta, 1 beta' and 1 omega subunit. When a sigma factor is associated with the core the holoenzyme is formed, which can initiate transcription.

It carries out the reaction RNA(n) + a ribonucleoside 5'-triphosphate = RNA(n+1) + diphosphate. DNA-dependent RNA polymerase catalyzes the transcription of DNA into RNA using the four ribonucleoside triphosphates as substrates. In Shewanella denitrificans (strain OS217 / ATCC BAA-1090 / DSM 15013), this protein is DNA-directed RNA polymerase subunit alpha.